A 232-amino-acid chain; its full sequence is Fibrillarin-like rRNA/tRNA 2'-O-methyltransferase (232 aa).

Residues 89–90 (TT), 108–109 (EF), 133–134 (DA), and 153–156 (DIAQ) each bind S-adenosyl-L-methionine.

Belongs to the methyltransferase superfamily. Fibrillarin family. In terms of assembly, interacts with nop5. Component of box C/D small ribonucleoprotein (sRNP) particles that contain rpl7ae, FlpA and nop5, plus a guide RNA.

In terms of biological role, involved in pre-rRNA and tRNA processing. Utilizes the methyl donor S-adenosyl-L-methionine to catalyze the site-specific 2'-hydroxyl methylation of ribose moieties in rRNA and tRNA. Site specificity is provided by a guide RNA that base pairs with the substrate. Methylation occurs at a characteristic distance from the sequence involved in base pairing with the guide RNA. The sequence is that of Fibrillarin-like rRNA/tRNA 2'-O-methyltransferase from Saccharolobus islandicus (strain L.S.2.15 / Lassen #1) (Sulfolobus islandicus).